The sequence spans 94 residues: FXYD domain-containing ion transport regulator 6 (94 aa).

An N-terminal signal peptide occupies residues 1-17 (METVLILCSLLAPVVLA). Residues 18–34 (SAAEKEKEKDPFYYDYQ) are Extracellular-facing. A helical transmembrane segment spans residues 35-57 (TLRIGGLVFAVVLFSVGILLILS). Residues 58–94 (RRCKCSFNQKPRAPGDEEAQVENLITTNAAEPQKAEN) are Cytoplasmic-facing.

The protein belongs to the FXYD family. In terms of assembly, regulatory subunit of the sodium/potassium-transporting ATPase which is composed of a catalytic alpha subunit, a non-catalytic beta subunit and an additional regulatory subunit. The regulatory subunit, a member of the FXYD protein family, modulates the enzymatic activity in a tissue- and isoform-specific way by changing affinities of the Na+/K+-ATPase toward Na(+), K(+) or ATP. As to expression, expressed in the neuronal fibers of the medial part of lateral habenula nucleus, thalamus, hypothalamus, stria terminalis, zona incerta, amygdaloid body and cingulum, olfactory bulb, hippocampus, cerebral cortex and cerebellum. In the cerebellum there is a predominant expression pattern in the granule layer of lobules VI-IX of the posterior lobe. Detected in inner ear.

It is found in the cell membrane. Its function is as follows. Associates with and regulates the activity of the sodium/potassium-transporting ATPase (NKA) which catalyzes the hydrolysis of ATP coupled with the exchange of Na(+) and K(+) ions across the plasma membrane. Decreases the apparent affinity of the transporter for Na(+). In addition to modulating NKA kinetics, may also function as a regulator of NKA localization to the plasma membrane. In Rattus norvegicus (Rat), this protein is FXYD domain-containing ion transport regulator 6 (Fxyd6).